The chain runs to 165 residues: MDVLRAREQLRRRYLFPQDAEVPLEHEGYPRPETSTAVEKKEKPLPRLNIHSGFWILASIVVTYYVDFFQTVKENFHTSSWFLFGSALLLVSVSIAFYCIVYLEWYRGIEDYDIKYPALIPITTATFIVAGICFNVALWHVWSFFTPVLLFTQFMGVVMLTSLLG.

4 consecutive transmembrane segments (helical) span residues asparagine 49–phenylalanine 69, tryptophan 81–valine 101, leucine 119–tryptophan 139, and phenylalanine 144–leucine 164.

It is found in the membrane. The chain is Transmembrane protein 128 (TMEM128) from Bos taurus (Bovine).